The chain runs to 513 residues: ATP synthase subunit alpha (513 aa).

169 to 176 is an ATP binding site; sequence GDRQTGKT.

The protein belongs to the ATPase alpha/beta chains family. As to quaternary structure, F-type ATPases have 2 components, CF(1) - the catalytic core - and CF(0) - the membrane proton channel. CF(1) has five subunits: alpha(3), beta(3), gamma(1), delta(1), epsilon(1). CF(0) has three main subunits: a(1), b(2) and c(9-12). The alpha and beta chains form an alternating ring which encloses part of the gamma chain. CF(1) is attached to CF(0) by a central stalk formed by the gamma and epsilon chains, while a peripheral stalk is formed by the delta and b chains.

It localises to the cell inner membrane. It carries out the reaction ATP + H2O + 4 H(+)(in) = ADP + phosphate + 5 H(+)(out). Its function is as follows. Produces ATP from ADP in the presence of a proton gradient across the membrane. The alpha chain is a regulatory subunit. The chain is ATP synthase subunit alpha from Polynucleobacter necessarius subsp. necessarius (strain STIR1).